The following is a 247-amino-acid chain: Transcription factor otaR1 (247 aa).

Disordered regions lie at residues 1 to 48 (MEPA…ETSM) and 100 to 143 (DNAS…PLGN). The segment covering 23–47 (DESSSTGLSLGSLLSSSNDLSSETS) has biased composition (low complexity). The segment covering 134–143 (ANPTSVPLGN) has biased composition (polar residues). The segment at 156 to 196 (KKYHEKYKERNRVAAGKSRQKQVDLIELLQAEQREEERRRK) is basic motif. A bZIP domain is found at 156-219 (KKYHEKYKER…LDLKQELQHH (64 aa)). The segment at 198-212 (LERELSQIHKELLDL) is leucine-zipper.

The protein resides in the nucleus. Functionally, transcription factor; part of the gene cluster that mediates the biosynthesis of ochratoxin A (OTA), a mycotoxin demonstrated to have nephrotoxic, immunotoxic, genotoxic, neurotoxic, and teratogenic properties. Positively regulates the expression of the cluster genes otaA, otaB, otaC and otaD, and the subsequent production of OTA. The chain is Transcription factor otaR1 from Aspergillus carbonarius (strain ITEM 5010).